We begin with the raw amino-acid sequence, 283 residues long: Thymidylate synthase (283 aa).

Position 22 (Arg-22) interacts with dUMP. Catalysis depends on Cys-160, which acts as the Nucleophile. DUMP contacts are provided by residues 180–183, Asn-191, and 221–223; these read RSCD and HIY. Asp-183 contributes to the (6R)-5,10-methylene-5,6,7,8-tetrahydrofolate binding site. Ser-282 lines the (6R)-5,10-methylene-5,6,7,8-tetrahydrofolate pocket.

Belongs to the thymidylate synthase family. Bacterial-type ThyA subfamily. In terms of assembly, homodimer.

It localises to the cytoplasm. It carries out the reaction dUMP + (6R)-5,10-methylene-5,6,7,8-tetrahydrofolate = 7,8-dihydrofolate + dTMP. It participates in pyrimidine metabolism; dTTP biosynthesis. Catalyzes the reductive methylation of 2'-deoxyuridine-5'-monophosphate (dUMP) to 2'-deoxythymidine-5'-monophosphate (dTMP) while utilizing 5,10-methylenetetrahydrofolate (mTHF) as the methyl donor and reductant in the reaction, yielding dihydrofolate (DHF) as a by-product. This enzymatic reaction provides an intracellular de novo source of dTMP, an essential precursor for DNA biosynthesis. The polypeptide is Thymidylate synthase (Vibrio vulnificus (strain YJ016)).